The primary structure comprises 84 residues: Anaphase-promoting complex subunit 11 (84 aa).

Cysteine 23, cysteine 26, cysteine 34, cysteine 37, cysteine 44, cysteine 51, histidine 53, histidine 56, histidine 58, cysteine 59, cysteine 73, and cysteine 76 together coordinate Zn(2+). The RING-type zinc-finger motif lies at 34-77 (CPDCKVPGDDCPLVWGQCSHCFHMHCILKWLNAQQVQQHCPMCR).

The protein belongs to the RING-box family. As to quaternary structure, the mammalian APC/C is composed at least of 14 distinct subunits ANAPC1, ANAPC2, CDC27/APC3, ANAPC4, ANAPC5, CDC16/APC6, ANAPC7, CDC23/APC8, ANAPC10, ANAPC11, CDC26/APC12, ANAPC13, ANAPC15 and ANAPC16 that assemble into a complex of at least 19 chains with a combined molecular mass of around 1.2 MDa; APC/C interacts with FZR1 and FBXO5. Interacts with the cullin domain of ANAPC2. Interacts with UBE2D2. In terms of processing, auto-ubiquitinated.

Its subcellular location is the cytoplasm. The protein resides in the nucleus. The protein operates within protein modification; protein ubiquitination. Its function is as follows. Together with the cullin protein ANAPC2, constitutes the catalytic component of the anaphase promoting complex/cyclosome (APC/C), a cell cycle-regulated E3 ubiquitin ligase that controls progression through mitosis and the G1 phase of the cell cycle. The APC/C complex acts by mediating ubiquitination and subsequent degradation of target proteins: it mainly mediates the formation of 'Lys-11'-linked polyubiquitin chains and, to a lower extent, the formation of 'Lys-48'- and 'Lys-63'-linked polyubiquitin chains. The APC/C complex catalyzes assembly of branched 'Lys-11'-/'Lys-48'-linked branched ubiquitin chains on target proteins. May recruit the E2 ubiquitin-conjugating enzymes to the complex. The polypeptide is Anaphase-promoting complex subunit 11 (Anapc11) (Mus musculus (Mouse)).